The sequence spans 570 residues: Hydroxylamine reductase (570 aa).

Positions 5, 8, 17, and 23 each coordinate [4Fe-4S] cluster. The hybrid [4Fe-2O-2S] cluster site is built by histidine 266, glutamate 290, cysteine 334, cysteine 425, cysteine 453, cysteine 478, glutamate 513, and lysine 515. Cysteine 425 carries the post-translational modification Cysteine persulfide.

Belongs to the HCP family. [4Fe-4S] cluster is required as a cofactor. Requires hybrid [4Fe-2O-2S] cluster as cofactor.

Its subcellular location is the cytoplasm. It catalyses the reaction A + NH4(+) + H2O = hydroxylamine + AH2 + H(+). Catalyzes the reduction of hydroxylamine to form NH(3) and H(2)O. This chain is Hydroxylamine reductase, found in Clostridium botulinum (strain Loch Maree / Type A3).